We begin with the raw amino-acid sequence, 307 residues long: Small ribosomal subunit biogenesis GTPase RsgA (307 aa).

One can recognise a CP-type G domain in the interval 85–242 (RQDAWKTKLI…LIDSPGLQEF (158 aa)). GTP is bound by residues 135–138 (NKAD) and 184–192 (GQSGMGKST). Residues cysteine 266, cysteine 271, histidine 273, and cysteine 279 each coordinate Zn(2+).

This sequence belongs to the TRAFAC class YlqF/YawG GTPase family. RsgA subfamily. In terms of assembly, monomer. Associates with 30S ribosomal subunit, binds 16S rRNA. Zn(2+) is required as a cofactor.

Its subcellular location is the cytoplasm. Its function is as follows. One of several proteins that assist in the late maturation steps of the functional core of the 30S ribosomal subunit. Helps release RbfA from mature subunits. May play a role in the assembly of ribosomal proteins into the subunit. Circularly permuted GTPase that catalyzes slow GTP hydrolysis, GTPase activity is stimulated by the 30S ribosomal subunit. The polypeptide is Small ribosomal subunit biogenesis GTPase RsgA (Neisseria meningitidis serogroup C (strain 053442)).